The following is a 100-amino-acid chain: Small ribosomal subunit protein bS21 (100 aa).

A compositionally biased stretch (basic and acidic residues) spans 37–52 (EKPSEKKAREKAEAVR). The interval 37–100 (EKPSEKKARE…GAGAGPRGPR (64 aa)) is disordered. Residues 53 to 62 (RARKLARKKL) are compositionally biased toward basic residues. The segment covering 84–100 (GAAGAGAGAGAGPRGPR) has biased composition (gly residues).

Belongs to the bacterial ribosomal protein bS21 family.

This chain is Small ribosomal subunit protein bS21, found in Rhodopseudomonas palustris (strain BisB5).